We begin with the raw amino-acid sequence, 347 residues long: DnaJ protein ERDJ3B (347 aa).

An N-terminal signal peptide occupies residues 1–23; it reads MAAPRWIGPLLLLLLHFVAAVAG. The J domain maps to 25 to 90; it reads SYYDVLQVPK…EKRKIYDRYG (66 aa).

As to quaternary structure, interacts with BIP1.

It localises to the endoplasmic reticulum. May play a role in protein folding in the endoplasmic reticulum. This Oryza sativa subsp. japonica (Rice) protein is DnaJ protein ERDJ3B.